A 198-amino-acid polypeptide reads, in one-letter code: Large ribosomal subunit protein bL25 (198 aa).

The protein belongs to the bacterial ribosomal protein bL25 family. CTC subfamily. In terms of assembly, part of the 50S ribosomal subunit; part of the 5S rRNA/L5/L18/L25 subcomplex. Contacts the 5S rRNA. Binds to the 5S rRNA independently of L5 and L18.

In terms of biological role, this is one of the proteins that binds to the 5S RNA in the ribosome where it forms part of the central protuberance. This Nitrosomonas europaea (strain ATCC 19718 / CIP 103999 / KCTC 2705 / NBRC 14298) protein is Large ribosomal subunit protein bL25.